Consider the following 402-residue polypeptide: Formate-dependent phosphoribosylglycinamide formyltransferase (402 aa).

Residues 23–24 and glutamate 83 contribute to the N(1)-(5-phospho-beta-D-ribosyl)glycinamide site; that span reads EL. ATP-binding positions include arginine 116, lysine 157, 162–167, 197–200, and glutamate 205; these read SSGKGQ and ESQI. The ATP-grasp domain maps to 121–316; the sequence is RLAAEELGLP…EFELHARAIL (196 aa). Residues glutamate 275 and glutamate 287 each contribute to the Mg(2+) site. N(1)-(5-phospho-beta-D-ribosyl)glycinamide contacts are provided by residues aspartate 294, lysine 363, and 370-371; that span reads RR.

This sequence belongs to the PurK/PurT family. As to quaternary structure, homodimer.

It catalyses the reaction N(1)-(5-phospho-beta-D-ribosyl)glycinamide + formate + ATP = N(2)-formyl-N(1)-(5-phospho-beta-D-ribosyl)glycinamide + ADP + phosphate + H(+). It participates in purine metabolism; IMP biosynthesis via de novo pathway; N(2)-formyl-N(1)-(5-phospho-D-ribosyl)glycinamide from N(1)-(5-phospho-D-ribosyl)glycinamide (formate route): step 1/1. Its function is as follows. Involved in the de novo purine biosynthesis. Catalyzes the transfer of formate to 5-phospho-ribosyl-glycinamide (GAR), producing 5-phospho-ribosyl-N-formylglycinamide (FGAR). Formate is provided by PurU via hydrolysis of 10-formyl-tetrahydrofolate. The chain is Formate-dependent phosphoribosylglycinamide formyltransferase from Acinetobacter baumannii (strain ATCC 17978 / DSM 105126 / CIP 53.77 / LMG 1025 / NCDC KC755 / 5377).